Consider the following 232-residue polypeptide: Phosphatidylserine decarboxylase proenzyme (232 aa).

S190 serves as the catalytic Schiff-base intermediate with substrate; via pyruvic acid. At S190 the chain carries Pyruvic acid (Ser); by autocatalysis.

The protein belongs to the phosphatidylserine decarboxylase family. PSD-A subfamily. As to quaternary structure, heterodimer of a large membrane-associated beta subunit and a small pyruvoyl-containing alpha subunit. It depends on pyruvate as a cofactor. Is synthesized initially as an inactive proenzyme. Formation of the active enzyme involves a self-maturation process in which the active site pyruvoyl group is generated from an internal serine residue via an autocatalytic post-translational modification. Two non-identical subunits are generated from the proenzyme in this reaction, and the pyruvate is formed at the N-terminus of the alpha chain, which is derived from the carboxyl end of the proenzyme. The post-translation cleavage follows an unusual pathway, termed non-hydrolytic serinolysis, in which the side chain hydroxyl group of the serine supplies its oxygen atom to form the C-terminus of the beta chain, while the remainder of the serine residue undergoes an oxidative deamination to produce ammonia and the pyruvoyl prosthetic group on the alpha chain.

The protein resides in the cell membrane. It carries out the reaction a 1,2-diacyl-sn-glycero-3-phospho-L-serine + H(+) = a 1,2-diacyl-sn-glycero-3-phosphoethanolamine + CO2. The protein operates within phospholipid metabolism; phosphatidylethanolamine biosynthesis; phosphatidylethanolamine from CDP-diacylglycerol: step 2/2. Its function is as follows. Catalyzes the formation of phosphatidylethanolamine (PtdEtn) from phosphatidylserine (PtdSer). This chain is Phosphatidylserine decarboxylase proenzyme, found in Sinorhizobium medicae (strain WSM419) (Ensifer medicae).